We begin with the raw amino-acid sequence, 136 residues long: Aspartate 1-decarboxylase (136 aa).

Catalysis depends on Ser25, which acts as the Schiff-base intermediate with substrate; via pyruvic acid. Ser25 bears the Pyruvic acid (Ser) mark. Residue Thr57 coordinates substrate. Tyr58 serves as the catalytic Proton donor. Gly73 to Ala75 is a substrate binding site. The tract at residues Ile117–Asn136 is disordered.

Belongs to the PanD family. In terms of assembly, heterooctamer of four alpha and four beta subunits. The cofactor is pyruvate. Post-translationally, is synthesized initially as an inactive proenzyme, which is activated by self-cleavage at a specific serine bond to produce a beta-subunit with a hydroxyl group at its C-terminus and an alpha-subunit with a pyruvoyl group at its N-terminus.

It localises to the cytoplasm. The enzyme catalyses L-aspartate + H(+) = beta-alanine + CO2. It participates in cofactor biosynthesis; (R)-pantothenate biosynthesis; beta-alanine from L-aspartate: step 1/1. Functionally, catalyzes the pyruvoyl-dependent decarboxylation of aspartate to produce beta-alanine. This is Aspartate 1-decarboxylase from Chloroherpeton thalassium (strain ATCC 35110 / GB-78).